Consider the following 89-residue polypeptide: Putative regulatory protein BPUM_1466 (89 aa).

Belongs to the RemA family.

This chain is Putative regulatory protein BPUM_1466, found in Bacillus pumilus (strain SAFR-032).